A 95-amino-acid polypeptide reads, in one-letter code: Small ribosomal subunit protein bS21 (95 aa).

Residues lysine 56–arginine 95 are disordered. Over residues alanine 78 to alanine 88 the composition is skewed to gly residues.

Belongs to the bacterial ribosomal protein bS21 family.

In Nitrobacter winogradskyi (strain ATCC 25391 / DSM 10237 / CIP 104748 / NCIMB 11846 / Nb-255), this protein is Small ribosomal subunit protein bS21.